The sequence spans 241 residues: Pyridoxine 5'-phosphate synthase (241 aa).

Residue N7 participates in 3-amino-2-oxopropyl phosphate binding. A 1-deoxy-D-xylulose 5-phosphate-binding site is contributed by 9–10; it reads DH. R18 is a 3-amino-2-oxopropyl phosphate binding site. H43 acts as the Proton acceptor in catalysis. 1-deoxy-D-xylulose 5-phosphate contacts are provided by R45 and H50. E70 acts as the Proton acceptor in catalysis. T100 is a 1-deoxy-D-xylulose 5-phosphate binding site. Catalysis depends on H191, which acts as the Proton donor. 3-amino-2-oxopropyl phosphate contacts are provided by residues G192 and 213–214; that span reads GH.

This sequence belongs to the PNP synthase family. As to quaternary structure, homooctamer; tetramer of dimers.

It localises to the cytoplasm. The catalysed reaction is 3-amino-2-oxopropyl phosphate + 1-deoxy-D-xylulose 5-phosphate = pyridoxine 5'-phosphate + phosphate + 2 H2O + H(+). It functions in the pathway cofactor biosynthesis; pyridoxine 5'-phosphate biosynthesis; pyridoxine 5'-phosphate from D-erythrose 4-phosphate: step 5/5. In terms of biological role, catalyzes the complicated ring closure reaction between the two acyclic compounds 1-deoxy-D-xylulose-5-phosphate (DXP) and 3-amino-2-oxopropyl phosphate (1-amino-acetone-3-phosphate or AAP) to form pyridoxine 5'-phosphate (PNP) and inorganic phosphate. This chain is Pyridoxine 5'-phosphate synthase, found in Nitratidesulfovibrio vulgaris (strain ATCC 29579 / DSM 644 / CCUG 34227 / NCIMB 8303 / VKM B-1760 / Hildenborough) (Desulfovibrio vulgaris).